Consider the following 471-residue polypeptide: 5-hydroxytryptamine receptor 2A (471 aa).

Residues 1–80 (MDILCEENTS…LQEKNWSALL (80 aa)) lie on the Extracellular side of the membrane. Residues Asn-8, Asn-38, Asn-44, Asn-51, and Asn-54 are each glycosylated (N-linked (GlcNAc...) asparagine). Residues 81 to 97 (TAVVIILTIAGNILVIM) traverse the membrane as a helical segment. Over 98 to 111 (AVSLEKKLQNATNY) the chain is Cytoplasmic. Residues 112-137 (FLMSLAIADMLLGFLVMPVSMLTILY) traverse the membrane as a helical segment. Residues 138–146 (GYRWPLPSK) lie on the Extracellular side of the membrane. The helical transmembrane segment at 147-171 (LCAVWIYLDVLFSTASIMHLCAISL) threads the bilayer. Cys-148 and Cys-227 are joined by a disulfide. Position 155 (Asp-155) interacts with serotonin. Residues 172–174 (DRY) carry the DRY motif; important for ligand-induced conformation changes motif. Residues 172–191 (DRYVAIQNPIHHSRFNSRTK) are Cytoplasmic-facing. Residues 192-215 (AFLKIIAVWTISVGISMPIPVFGL) form a helical membrane-spanning segment. The Extracellular segment spans residues 216–232 (QDDSKVFKEGSCLLADD). The chain crosses the membrane as a helical span at residues 233–258 (NFVLIGSFVSFFIPLTIMVITYFLTI). At 259 to 322 (KSLQKEATLC…QSISNEQKAC (64 aa)) the chain is on the cytoplasmic side. Ser-280 is subject to Phosphoserine. The helical transmembrane segment at 323-348 (KVLGIVFFLFVVMWCPFFITNIMAVI) threads the bilayer. Asn-343 contacts serotonin. A disulfide bridge links Cys-349 with Cys-353. The Extracellular segment spans residues 349–356 (CKESCNED). A helical membrane pass occupies residues 357-382 (VIGALLNVFVWIGYLSSAVNPLVYTL). Positions 376–380 (NPLVY) match the NPxxY motif; important for ligand-induced conformation changes and signaling motif. Residues 383 to 471 (FNKTYRSAFS…DGVNEKVSCV (89 aa)) lie on the Cytoplasmic side of the membrane. A disordered region spans residues 450-471 (KQHSEDASKDNSDGVNEKVSCV). Positions 451–465 (QHSEDASKDNSDGVN) are enriched in basic and acidic residues. The short motif at 469 to 471 (SCV) is the PDZ-binding element.

The protein belongs to the G-protein coupled receptor 1 family. As to quaternary structure, interacts (via C-terminus) with MPDZ and PATJ. May interact (via C-terminus) with MPP3, PRDX6, DLG4, DLG1, CASK, APBA1 and MAGI2. Interacts with GRM2 and DRD2; this may affect signaling.

It is found in the cell membrane. It localises to the cell projection. Its subcellular location is the dendrite. The protein localises to the axon. The protein resides in the cytoplasmic vesicle. It is found in the membrane. It localises to the caveola. Its subcellular location is the presynapse. Its activity is regulated as follows. G-protein coupled receptor activity is regulated by lipids: oleamide increases HTR2A-mediated activity. In terms of biological role, G-protein coupled receptor for 5-hydroxytryptamine (serotonin). Also functions as a receptor for various drugs and psychoactive substances, including mescaline, psilocybin, 1-(2,5-dimethoxy-4-iodophenyl)-2-aminopropane (DOI) and lysergic acid diethylamide (LSD). Ligand binding causes a conformation change that triggers signaling via guanine nucleotide-binding proteins (G proteins) and modulates the activity of downstream effectors. HTR2A is coupled to G(q)/G(11) G alpha proteins and activates phospholipase C-beta, releasing diacylglycerol (DAG) and inositol 1,4,5-trisphosphate (IP3) second messengers that modulate the activity of phosphatidylinositol 3-kinase and promote the release of Ca(2+) ions from intracellular stores, respectively. Beta-arrestin family members inhibit signaling via G proteins and mediate activation of alternative signaling pathways. Affects neural activity, perception, cognition and mood. Plays a role in the regulation of behavior, including responses to anxiogenic situations and psychoactive substances. Plays a role in intestinal smooth muscle contraction, and may play a role in arterial vasoconstriction. The protein is 5-hydroxytryptamine receptor 2A (HTR2A) of Macaca mulatta (Rhesus macaque).